Here is a 200-residue protein sequence, read N- to C-terminus: MEKPYNKNEGNLENEGKPEDEVEPDDEGKSDEEEKPDVEGKTECEGKREDEGEPGDEGQLEDEGSQEKQGRSEGEGKPQGEGKPASQAKPESQPRAAEKRPAEDYVPRKAKRKTDRGTDDSPKDSQEDLQERHLSSEEMMRECGDVSRAQEELRKKQKMGGFHWMQRDVQDPFAPRGQRGVRGVRGGGRGQRGLHDIPYL.

Positions 1–200 (MEKPYNKNEG…QRGLHDIPYL (200 aa)) are disordered. Residues 20-36 (DEVEPDDEGKSDEEEKP) are compositionally biased toward acidic residues. Ser30 bears the Phosphoserine mark. Positions 37 to 50 (DVEGKTECEGKRED) are enriched in basic and acidic residues. Residues 51 to 64 (EGEPGDEGQLEDEG) show a composition bias toward acidic residues. Phosphoserine is present on Ser65. 3 stretches are compositionally biased toward basic and acidic residues: residues 65–80 (SQEK…KPQG), 96–107 (AAEKRPAEDYVP), and 115–154 (DRGT…EELR).

This sequence belongs to the TFS-II family. TFA subfamily.

The protein localises to the nucleus. Functionally, may be involved in transcriptional regulation. The sequence is that of Transcription elongation factor A protein-like 3 (TCEAL3) from Homo sapiens (Human).